Reading from the N-terminus, the 355-residue chain is Thiamine thiazole synthase, chloroplastic (355 aa).

Residues Met1–Asn42 constitute a chloroplast transit peptide. Substrate contacts are provided by residues Ala96, Glu116–Gln117, Gly124, and Val189. Cys218 carries the post-translational modification 2,3-didehydroalanine (Cys). Substrate contacts are provided by residues Asp220, His235, Met287, and Arg297–Gly299.

This sequence belongs to the THI4 family. As to quaternary structure, homooctamer. Fe cation is required as a cofactor. Post-translationally, during the catalytic reaction, a sulfide is transferred from Cys-218 to a reaction intermediate, generating a dehydroalanine residue.

Its subcellular location is the plastid. The protein localises to the chloroplast. It carries out the reaction [ADP-thiazole synthase]-L-cysteine + glycine + NAD(+) = [ADP-thiazole synthase]-dehydroalanine + ADP-5-ethyl-4-methylthiazole-2-carboxylate + nicotinamide + 3 H2O + 2 H(+). Functionally, involved in biosynthesis of the thiamine precursor thiazole. Catalyzes the conversion of NAD and glycine to adenosine diphosphate 5-(2-hydroxyethyl)-4-methylthiazole-2-carboxylic acid (ADT), an adenylated thiazole intermediate. The reaction includes an iron-dependent sulfide transfer from a conserved cysteine residue of the protein to a thiazole intermediate. The enzyme can only undergo a single turnover, which suggests it is a suicide enzyme. May have additional roles in adaptation to various stress conditions and in DNA damage tolerance. Required fot thiamine accumulation and disease resistance toward the bacterial pathogen Xanthomonas oryzae pv oryzae (Xoo) and the fungal pathogen Magnaporthe oryzae. During infection by Xoo, functions positively in the defense pathway initiated by the resistance genes XA3 and XA26 by promoting thiamine synthesis. May function upstream of the defense-related proteins peroxidases, phenylalanine ammonia-lyases and pathogenesis-related proteins. (Microbial infection) During infection by Xanthomonas oryzae pv oryzae (Xoo), THI1 interacts with the type III effector virulence factor xadA from Xoo, which is an adhesin-like outer membrane protein. This probably attenuates the function of THI1 in defense response. This Oryza sativa subsp. japonica (Rice) protein is Thiamine thiazole synthase, chloroplastic.